Here is an 89-residue protein sequence, read N- to C-terminus: Putative defensin-like protein 89 (89 aa).

Residues 1 to 25 (MGFKNNLSLVSVMVFALILLPMISG) form the signal peptide. 4 cysteine pairs are disulfide-bonded: Cys-30/Cys-66, Cys-36/Cys-57, Cys-42/Cys-64, and Cys-46/Cys-65.

Belongs to the DEFL family.

It localises to the secreted. The polypeptide is Putative defensin-like protein 89 (Arabidopsis thaliana (Mouse-ear cress)).